The primary structure comprises 296 residues: Glycine--tRNA ligase alpha subunit (296 aa).

The protein belongs to the class-II aminoacyl-tRNA synthetase family. Tetramer of two alpha and two beta subunits.

It is found in the cytoplasm. The catalysed reaction is tRNA(Gly) + glycine + ATP = glycyl-tRNA(Gly) + AMP + diphosphate. In Francisella tularensis subsp. novicida (strain U112), this protein is Glycine--tRNA ligase alpha subunit.